The following is a 52-amino-acid chain: Lantibiotic epidermin (52 aa).

A propeptide spanning residues 1–30 is cleaved from the precursor; that stretch reads MEAVKEKNDLFNLDVKVNAKESNDSGAEPR. The segment at residues 33–37 is a cross-link (lanthionine (Ser-Cys)); sequence SKFIC. Residues 38–41 constitute a cross-link (beta-methyllanthionine (Thr-Cys)); that stretch reads TPGC. Thr-44 carries the (Z)-2,3-didehydrobutyrine modification. A cross-link (lanthionine (Ser-Cys)) is located at residues 46-51; that stretch reads SFNSYC. A cross-link (S-(2-aminovinyl)-D-cysteine (Ser-Cys)) is located at residues 49-52; the sequence is SYCC.

The protein belongs to the type A lantibiotic family. In terms of processing, maturation of lantibiotics involves the enzymatic conversion of Thr, and Ser into dehydrated AA and the formation of thioether bonds with cysteine. The C-terminal lanthionine undergoes decarboxylation. This is followed by membrane translocation and cleavage of the modified precursor. The 2,3-didehydrobutyrine is determined to be the Z-isomer.

In terms of biological role, lanthionine-containing peptide antibiotic (lantibiotic) active on Gram-positive bacteria. The bactericidal activity of lantibiotics is based on depolarization of energized bacterial cytoplasmic membranes, initiated by the formation of aqueous transmembrane pores. This is Lantibiotic epidermin (epiA) from Staphylococcus epidermidis.